A 526-amino-acid polypeptide reads, in one-letter code: Peptide chain release factor 3 (526 aa).

The tr-type G domain maps to 8–277 (GKRRTFAIIS…GLTDWAPAPQ (270 aa)). GTP-binding positions include 17-24 (SHPDAGKT), 85-89 (DTPGH), and 139-142 (NKLD).

This sequence belongs to the TRAFAC class translation factor GTPase superfamily. Classic translation factor GTPase family. PrfC subfamily.

The protein localises to the cytoplasm. Its function is as follows. Increases the formation of ribosomal termination complexes and stimulates activities of RF-1 and RF-2. It binds guanine nucleotides and has strong preference for UGA stop codons. It may interact directly with the ribosome. The stimulation of RF-1 and RF-2 is significantly reduced by GTP and GDP, but not by GMP. This Aliivibrio fischeri (strain ATCC 700601 / ES114) (Vibrio fischeri) protein is Peptide chain release factor 3.